The primary structure comprises 297 residues: Ribosomal RNA small subunit methyltransferase A (297 aa).

The S-adenosyl-L-methionine site is built by Asn31, Leu33, Gly58, Glu79, Asp104, and Asn129.

It belongs to the class I-like SAM-binding methyltransferase superfamily. rRNA adenine N(6)-methyltransferase family. RsmA subfamily.

The protein localises to the cytoplasm. It carries out the reaction adenosine(1518)/adenosine(1519) in 16S rRNA + 4 S-adenosyl-L-methionine = N(6)-dimethyladenosine(1518)/N(6)-dimethyladenosine(1519) in 16S rRNA + 4 S-adenosyl-L-homocysteine + 4 H(+). In terms of biological role, specifically dimethylates two adjacent adenosines (A1518 and A1519) in the loop of a conserved hairpin near the 3'-end of 16S rRNA in the 30S particle. May play a critical role in biogenesis of 30S subunits. This is Ribosomal RNA small subunit methyltransferase A from Staphylococcus aureus (strain bovine RF122 / ET3-1).